Here is a 348-residue protein sequence, read N- to C-terminus: Ferredoxin--NADP reductase 1 (348 aa).

7 residues coordinate FAD: Asp33, Lys41, Tyr45, Val85, Leu120, Asp287, and Ser328.

This sequence belongs to the ferredoxin--NADP reductase type 2 family. In terms of assembly, homodimer. FAD serves as cofactor.

It carries out the reaction 2 reduced [2Fe-2S]-[ferredoxin] + NADP(+) + H(+) = 2 oxidized [2Fe-2S]-[ferredoxin] + NADPH. In Oceanobacillus iheyensis (strain DSM 14371 / CIP 107618 / JCM 11309 / KCTC 3954 / HTE831), this protein is Ferredoxin--NADP reductase 1.